The following is a 157-amino-acid chain: S-ribosylhomocysteine lyase (157 aa).

Residues H60, H64, and C127 each coordinate Fe cation.

It belongs to the LuxS family. Homodimer. The cofactor is Fe cation.

It catalyses the reaction S-(5-deoxy-D-ribos-5-yl)-L-homocysteine = (S)-4,5-dihydroxypentane-2,3-dione + L-homocysteine. Functionally, involved in the synthesis of autoinducer 2 (AI-2) which is secreted by bacteria and is used to communicate both the cell density and the metabolic potential of the environment. The regulation of gene expression in response to changes in cell density is called quorum sensing. Catalyzes the transformation of S-ribosylhomocysteine (RHC) to homocysteine (HC) and 4,5-dihydroxy-2,3-pentadione (DPD). The sequence is that of S-ribosylhomocysteine lyase from Helicobacter acinonychis (strain Sheeba).